A 313-amino-acid chain; its full sequence is Interferon-inducible double-stranded RNA-dependent protein kinase activator A (313 aa).

The interval 1–20 (MSHSRHRAEAPPLQREDSGT) is disordered. Sufficient for self-association and interaction with TARBP2 stretches follow at residues 1-103 (MSHS…KANA), 102-195 (NASI…FSNI), and 195-313 (ISPE…AERK). Ser-18 bears the Phosphoserine mark. 3 consecutive DRBM domains span residues 34 to 101 (TPIQ…ILKA), 126 to 194 (NPIG…KFSN), and 240 to 308 (DYIQ…YLKI). Residues Ser-167, Ser-246, and Ser-287 each carry the phosphoserine modification.

The protein belongs to the PRKRA family. Homodimer. Interacts with DICER1, AGO2 and TARBP2. Also able to interact with dsRNA. Interacts with EIF2AK2/PKR through its DRBM domains. Interacts with DUS2L (via DRBM domain). Interacts with UBC9. Forms a complex with UBC9 and p53/TP53. Post-translationally, phosphorylated at Ser-246 in unstressed cells and at Ser-287 in stressed cells. Phosphorylation at Ser-246 appears to be a prerequisite for subsequent phosphorylation at Ser-287. Phosphorylation at Ser-246 and Ser-287 are necessary for activation of EIF2AK2/PKR under conditions of stress. As to expression, expressed in brain, heart, kidney, liver, lung, muscle, spleen and testis.

Its subcellular location is the cytoplasm. The protein localises to the perinuclear region. Functionally, required for siRNA production by DICER1 and for subsequent siRNA-mediated post-transcriptional gene silencing. Does not seem to be required for processing of pre-miRNA to miRNA by DICER1. Activates EIF2AK2/PKR in the absence of double-stranded RNA (dsRNA), leading to phosphorylation of EIF2S1/EFI2-alpha and inhibition of translation and induction of apoptosis. Promotes UBC9-p53/TP53 association and sumoylation and phosphorylation of p53/TP53 at 'Lys-386' at 'Ser-392' respectively and enhances its activity in a EIF2AK2/PKR-dependent manner. This chain is Interferon-inducible double-stranded RNA-dependent protein kinase activator A (Prkra), found in Mus musculus (Mouse).